A 362-amino-acid polypeptide reads, in one-letter code: Histidinol-phosphate aminotransferase 1 (362 aa).

N6-(pyridoxal phosphate)lysine is present on lysine 226.

Belongs to the class-II pyridoxal-phosphate-dependent aminotransferase family. Histidinol-phosphate aminotransferase subfamily. Homodimer. Pyridoxal 5'-phosphate is required as a cofactor.

The catalysed reaction is L-histidinol phosphate + 2-oxoglutarate = 3-(imidazol-4-yl)-2-oxopropyl phosphate + L-glutamate. It participates in amino-acid biosynthesis; L-histidine biosynthesis; L-histidine from 5-phospho-alpha-D-ribose 1-diphosphate: step 7/9. This chain is Histidinol-phosphate aminotransferase 1, found in Dechloromonas aromatica (strain RCB).